A 263-amino-acid polypeptide reads, in one-letter code: UPF0246 protein Strop_2927 (263 aa).

Belongs to the UPF0246 family.

In Salinispora tropica (strain ATCC BAA-916 / DSM 44818 / JCM 13857 / NBRC 105044 / CNB-440), this protein is UPF0246 protein Strop_2927.